The following is a 93-amino-acid chain: Small ribosomal subunit protein uS19 (93 aa).

Belongs to the universal ribosomal protein uS19 family.

In terms of biological role, protein S19 forms a complex with S13 that binds strongly to the 16S ribosomal RNA. The protein is Small ribosomal subunit protein uS19 of Geobacter metallireducens (strain ATCC 53774 / DSM 7210 / GS-15).